The primary structure comprises 145 residues: Large ribosomal subunit protein uL13 (145 aa).

It belongs to the universal ribosomal protein uL13 family. As to quaternary structure, part of the 50S ribosomal subunit.

Its function is as follows. This protein is one of the early assembly proteins of the 50S ribosomal subunit, although it is not seen to bind rRNA by itself. It is important during the early stages of 50S assembly. The polypeptide is Large ribosomal subunit protein uL13 (Geobacillus thermodenitrificans (strain NG80-2)).